A 179-amino-acid chain; its full sequence is Cell division protein ZapC (179 aa).

The protein belongs to the ZapC family. In terms of assembly, interacts directly with FtsZ.

It localises to the cytoplasm. In terms of biological role, contributes to the efficiency of the cell division process by stabilizing the polymeric form of the cell division protein FtsZ. Acts by promoting interactions between FtsZ protofilaments and suppressing the GTPase activity of FtsZ. In Photobacterium profundum (strain SS9), this protein is Cell division protein ZapC.